The sequence spans 662 residues: UvrABC system protein B (662 aa).

The Helicase ATP-binding domain occupies 25-412; that stretch reads EGVRRGYRYQ…SEQVVEQLIR (388 aa). 38-45 is an ATP binding site; that stretch reads GVTGSGKT. The Beta-hairpin signature appears at 91 to 114; sequence YYDYYQPEAYVPETDTYIEKDASI. The Helicase C-terminal domain occupies 429 to 595; the sequence is QVDDLIAEIR…TVVKGVRDVI (167 aa). Positions 620–655 constitute a UVR domain; sequence KSTIEQLEKEMRQAAIELQFEKAAKLRDMILELRKQ.

It belongs to the UvrB family. Forms a heterotetramer with UvrA during the search for lesions. Interacts with UvrC in an incision complex.

The protein localises to the cytoplasm. In terms of biological role, the UvrABC repair system catalyzes the recognition and processing of DNA lesions. A damage recognition complex composed of 2 UvrA and 2 UvrB subunits scans DNA for abnormalities. Upon binding of the UvrA(2)B(2) complex to a putative damaged site, the DNA wraps around one UvrB monomer. DNA wrap is dependent on ATP binding by UvrB and probably causes local melting of the DNA helix, facilitating insertion of UvrB beta-hairpin between the DNA strands. Then UvrB probes one DNA strand for the presence of a lesion. If a lesion is found the UvrA subunits dissociate and the UvrB-DNA preincision complex is formed. This complex is subsequently bound by UvrC and the second UvrB is released. If no lesion is found, the DNA wraps around the other UvrB subunit that will check the other stand for damage. The protein is UvrABC system protein B of Caldanaerobacter subterraneus subsp. tengcongensis (strain DSM 15242 / JCM 11007 / NBRC 100824 / MB4) (Thermoanaerobacter tengcongensis).